A 289-amino-acid chain; its full sequence is ATP synthase gamma chain (289 aa).

Belongs to the ATPase gamma chain family. As to quaternary structure, F-type ATPases have 2 components, CF(1) - the catalytic core - and CF(0) - the membrane proton channel. CF(1) has five subunits: alpha(3), beta(3), gamma(1), delta(1), epsilon(1). CF(0) has three main subunits: a, b and c.

Its subcellular location is the cell inner membrane. Functionally, produces ATP from ADP in the presence of a proton gradient across the membrane. The gamma chain is believed to be important in regulating ATPase activity and the flow of protons through the CF(0) complex. The polypeptide is ATP synthase gamma chain (Coxiella burnetii (strain CbuK_Q154) (Coxiella burnetii (strain Q154))).